An 865-amino-acid chain; its full sequence is cGMP-specific 3',5'-cyclic phosphodiesterase (865 aa).

The residue at position 92 (serine 92) is a Phosphoserine. GAF domains lie at 154 to 304 (DVTA…GIVL) and 336 to 493 (SLEV…GLGI). One can recognise a PDEase domain in the interval 526–850 (ETRELQALSA…QKWQALAEQQ (325 aa)). Histidine 603 acts as the Proton donor in catalysis. Histidine 607, histidine 643, aspartate 644, and aspartate 754 together coordinate Zn(2+). Aspartate 644 provides a ligand contact to Mg(2+). Glutamine 807 contributes to the 3',5'-cyclic GMP binding site.

It belongs to the cyclic nucleotide phosphodiesterase family. Zn(2+) serves as cofactor. It depends on Mg(2+) as a cofactor. Post-translationally, phosphorylation is regulated by binding of cGMP to the two allosteric sites. Phosphorylation by PRKG1 leads to its activation.

The catalysed reaction is 3',5'-cyclic GMP + H2O = GMP + H(+). Its pathway is purine metabolism; 3',5'-cyclic GMP degradation; GMP from 3',5'-cyclic GMP: step 1/1. Plays a role in signal transduction by regulating the intracellular concentration of cyclic nucleotides. This phosphodiesterase catalyzes the specific hydrolysis of cGMP to 5'-GMP. Specifically regulates nitric-oxide-generated cGMP. This is cGMP-specific 3',5'-cyclic phosphodiesterase (Pde5a) from Mus musculus (Mouse).